The chain runs to 311 residues: Acetyl-coenzyme A carboxylase carboxyl transferase subunit beta (311 aa).

In terms of domain architecture, CoA carboxyltransferase N-terminal spans 32 to 299 (LWVKCPVSEE…TSMPAALTPP (268 aa)). The disordered stretch occupies residues 291–311 (SMPAALTPPAPDHVVADGGSH).

Belongs to the AccD/PCCB family. As to quaternary structure, acetyl-CoA carboxylase is a heterohexamer composed of biotin carboxyl carrier protein (AccB), biotin carboxylase (AccC) and two subunits each of ACCase subunit alpha (AccA) and ACCase subunit beta (AccD).

The protein resides in the cytoplasm. It carries out the reaction N(6)-carboxybiotinyl-L-lysyl-[protein] + acetyl-CoA = N(6)-biotinyl-L-lysyl-[protein] + malonyl-CoA. It functions in the pathway lipid metabolism; malonyl-CoA biosynthesis; malonyl-CoA from acetyl-CoA: step 1/1. Component of the acetyl coenzyme A carboxylase (ACC) complex. Biotin carboxylase (BC) catalyzes the carboxylation of biotin on its carrier protein (BCCP) and then the CO(2) group is transferred by the transcarboxylase to acetyl-CoA to form malonyl-CoA. In Maricaulis maris (strain MCS10) (Caulobacter maris), this protein is Acetyl-coenzyme A carboxylase carboxyl transferase subunit beta.